Reading from the N-terminus, the 256-residue chain is Putative cysteine-rich repeat secretory protein 21 (256 aa).

A signal peptide spans 1 to 30 (MYSSVSKRLVSVHILVVVALQLLFIPNVLS). 2 Gnk2-homologous domains span residues 37-139 (YLHH…SIDT) and 145-253 (YQNN…LYPF).

It belongs to the cysteine-rich repeat secretory protein family.

It is found in the secreted. In Arabidopsis thaliana (Mouse-ear cress), this protein is Putative cysteine-rich repeat secretory protein 21 (CRRSP21).